Consider the following 652-residue polypeptide: Acetyl-coenzyme A synthetase (652 aa).

Residues 190–193 (RGGR) and T310 contribute to the CoA site. ATP contacts are provided by residues 386 to 388 (GEP), 410 to 415 (DTWWQT), D499, and R514. Position 522 (S522) interacts with CoA. Residue R525 participates in ATP binding. 3 residues coordinate Mg(2+): V536, H538, and V541. Residue R583 participates in CoA binding. Residue K608 is modified to N6-acetyllysine.

The protein belongs to the ATP-dependent AMP-binding enzyme family. Mg(2+) serves as cofactor. Post-translationally, acetylated. Deacetylation by the SIR2-homolog deacetylase activates the enzyme.

It catalyses the reaction acetate + ATP + CoA = acetyl-CoA + AMP + diphosphate. In terms of biological role, catalyzes the conversion of acetate into acetyl-CoA (AcCoA), an essential intermediate at the junction of anabolic and catabolic pathways. AcsA undergoes a two-step reaction. In the first half reaction, AcsA combines acetate with ATP to form acetyl-adenylate (AcAMP) intermediate. In the second half reaction, it can then transfer the acetyl group from AcAMP to the sulfhydryl group of CoA, forming the product AcCoA. The polypeptide is Acetyl-coenzyme A synthetase (Methylorubrum extorquens (strain CM4 / NCIMB 13688) (Methylobacterium extorquens)).